The following is a 191-amino-acid chain: Peptidyl-tRNA hydrolase (191 aa).

Tyrosine 16 contacts tRNA. Residue histidine 21 is the Proton acceptor of the active site. TRNA-binding residues include phenylalanine 66, asparagine 68, and asparagine 114.

Belongs to the PTH family. In terms of assembly, monomer.

It localises to the cytoplasm. It catalyses the reaction an N-acyl-L-alpha-aminoacyl-tRNA + H2O = an N-acyl-L-amino acid + a tRNA + H(+). Its function is as follows. Hydrolyzes ribosome-free peptidyl-tRNAs (with 1 or more amino acids incorporated), which drop off the ribosome during protein synthesis, or as a result of ribosome stalling. In terms of biological role, catalyzes the release of premature peptidyl moieties from peptidyl-tRNA molecules trapped in stalled 50S ribosomal subunits, and thus maintains levels of free tRNAs and 50S ribosomes. The protein is Peptidyl-tRNA hydrolase of Geotalea daltonii (strain DSM 22248 / JCM 15807 / FRC-32) (Geobacter daltonii).